The chain runs to 436 residues: GTPase Der (436 aa).

EngA-type G domains are found at residues 4–167 (PVVA…PKEE) and 176–351 (VKFS…DNHS). Residues 10 to 17 (GRPNVGKS), 57 to 61 (DTGGI), 119 to 122 (NKVD), 182 to 189 (GRPNVGKS), 229 to 233 (DTAGM), and 294 to 297 (NKWD) each bind GTP. Positions 352-436 (LRVQSSMLND…PIRVIARKRK (85 aa)) constitute a KH-like domain.

Belongs to the TRAFAC class TrmE-Era-EngA-EngB-Septin-like GTPase superfamily. EngA (Der) GTPase family. In terms of assembly, associates with the 50S ribosomal subunit.

Its function is as follows. GTPase that plays an essential role in the late steps of ribosome biogenesis. This Listeria welshimeri serovar 6b (strain ATCC 35897 / DSM 20650 / CCUG 15529 / CIP 8149 / NCTC 11857 / SLCC 5334 / V8) protein is GTPase Der.